A 74-amino-acid polypeptide reads, in one-letter code: Large ribosomal subunit protein uL29 (74 aa).

This sequence belongs to the universal ribosomal protein uL29 family.

This chain is Large ribosomal subunit protein uL29 (rpmC), found in Streptomyces coelicolor (strain ATCC BAA-471 / A3(2) / M145).